Here is a 389-residue protein sequence, read N- to C-terminus: Large ribosomal subunit protein uL3 (389 aa).

It belongs to the universal ribosomal protein uL3 family. As to quaternary structure, component of the large ribosomal subunit. Mature ribosomes consist of a small (40S) and a large (60S) subunit. The 40S subunit contains about 32 different proteins and 1 molecule of RNA (18S). The 60S subunit contains 45 different proteins and 3 molecules of RNA (25S, 5.8S and 5S).

Its subcellular location is the cytoplasm. Functionally, component of the ribosome, a large ribonucleoprotein complex responsible for the synthesis of proteins in the cell. The small ribosomal subunit (SSU) binds messenger RNAs (mRNAs) and translates the encoded message by selecting cognate aminoacyl-transfer RNA (tRNA) molecules. The large subunit (LSU) contains the ribosomal catalytic site termed the peptidyl transferase center (PTC), which catalyzes the formation of peptide bonds, thereby polymerizing the amino acids delivered by tRNAs into a polypeptide chain. The nascent polypeptides leave the ribosome through a tunnel in the LSU and interact with protein factors that function in enzymatic processing, targeting, and the membrane insertion of nascent chains at the exit of the ribosomal tunnel. RPL3 plays a role in coordinating processes of accommodating the aminoacyl-tRNA in the PTC. The sequence is that of Large ribosomal subunit protein uL3 from Candida albicans (strain SC5314 / ATCC MYA-2876) (Yeast).